The chain runs to 846 residues: Exonuclease 1 (846 aa).

Positions 1–99 (MGIQGLLQFI…RSRRERRQAN (99 aa)) are N-domain. The Mg(2+) site is built by Asp30, Asp78, Glu150, Asp152, Asp171, Asp173, Asp225, and Asp270. The interval 129-387 (MAHKVIKAAR…RPESGTVSDA (259 aa)) is interaction with MSH3. Positions 138 to 229 (RSQGVDCLVA…ILSGCDYLSS (92 aa)) are I-domain. The segment at 372 to 396 (HRNYSPRPESGTVSDAPQLKENPST) is disordered. Ser376 bears the Phosphoserine mark. Residues 382–396 (GTVSDAPQLKENPST) show a composition bias toward polar residues. An interaction with MLH1 region spans residues 388–490 (PQLKENPSTV…NKFATFLQRK (103 aa)). A Nuclear localization signal motif is present at residues 418–421 (KRPR). Residues Ser422 and Ser454 each carry the phosphoserine modification. Lys482 carries the post-translational modification N6-acetyllysine. At Thr581 the chain carries Phosphothreonine. Phosphoserine occurs at positions 598 and 610. The interval 600-846 (PTLGTLRSCF…CGRVQRAIFQ (247 aa)) is interaction with MSH2. The tract at residues 618 to 781 (FSRTPSPSPS…SIQKRKHHNA (164 aa)) is disordered. Polar residues-rich tracts occupy residues 620–631 (RTPSPSPSTALQ) and 639–654 (SPTSLPENNMSDVSQL). At Thr621 the chain carries Phosphothreonine. Residues Ser623, Ser639, Ser660, and Ser674 each carry the phosphoserine modification. The span at 655-671 (KSEESSDDESHPLREEA) shows a compositional bias: basic and acidic residues. Composition is skewed to polar residues over residues 672 to 689 (CSSQSQESGEFSLQSSNA), 713 to 722 (DSQSDQTSKL), and 743 to 754 (KSSSADSLSTTK). Residue Ser714 is modified to Phosphoserine; by ATR. Ser746 carries the post-translational modification Phosphoserine. An interaction with MLH1 region spans residues 787–846 (LQIKLNELWKNFGFKKDSEKLPPCKKPLSPVRDNIQLTPEAEEDIFNKPECGRVQRAIFQ).

Belongs to the XPG/RAD2 endonuclease family. EXO1 subfamily. In terms of assembly, interacts with the MLH1-PMS2 heterodimer via MLH1. Interacts with MSH3. Interacts with the MSH2-MSH6 heterodimer via MSH2, and this interaction may increase the processivity of the 5'-&gt;3' exonuclease activity. Interacts with PCNA, and this interaction may both stimulate the cryptic 3'-&gt;5' exonuclease activity and suppress the 5'-&gt;3' exonuclease activity. Interacts with WRN, and this interaction stimulates both the 5'-&gt;3' exonuclease activity and cleavage of 5'-overhanging flap structures. Interacts with RECQL/RECQ1, and this interaction stimulates cleavage of 5'-overhanging flap structures. Interacts with DNA helicase ZGRF1; the interaction is increased following DNA damage induction. Mg(2+) serves as cofactor. Post-translationally, phosphorylated upon DNA damage and in response to agents stalling DNA replication, probably by ATM or ATR. Phosphorylation at Ser-454, Thr-621 and Ser-714 is induced upon DNA-damage caused by treatment with hydroxyurea (HU) but not upon IR treatment. The HU-induced EXO1 triple phosphorylation facilitates destabilization/degradation of the protein. Highly expressed in bone marrow, testis and thymus. Expressed at lower levels in colon, lymph nodes, ovary, placenta, prostate, small intestine, spleen and stomach.

The protein localises to the nucleus. Functionally, 5'-&gt;3' double-stranded DNA exonuclease which may also possess a cryptic 3'-&gt;5' double-stranded DNA exonuclease activity. Functions in DNA mismatch repair (MMR) to excise mismatch-containing DNA tracts directed by strand breaks located either 5' or 3' to the mismatch. Also exhibits endonuclease activity against 5'-overhanging flap structures similar to those generated by displacement synthesis when DNA polymerase encounters the 5'-end of a downstream Okazaki fragment. Required for somatic hypermutation (SHM) and class switch recombination (CSR) of immunoglobulin genes. Essential for male and female meiosis. The sequence is that of Exonuclease 1 (EXO1) from Homo sapiens (Human).